The chain runs to 302 residues: Acetylglutamate kinase (302 aa).

Substrate contacts are provided by residues 67 to 68 (GG), Arg-89, and Asn-189.

It belongs to the acetylglutamate kinase family. ArgB subfamily.

It is found in the cytoplasm. It carries out the reaction N-acetyl-L-glutamate + ATP = N-acetyl-L-glutamyl 5-phosphate + ADP. The protein operates within amino-acid biosynthesis; L-arginine biosynthesis; N(2)-acetyl-L-ornithine from L-glutamate: step 2/4. In terms of biological role, catalyzes the ATP-dependent phosphorylation of N-acetyl-L-glutamate. In Streptomyces clavuligerus, this protein is Acetylglutamate kinase.